We begin with the raw amino-acid sequence, 470 residues long: tRNA(Ile)-lysidine synthase (470 aa).

32 to 37 serves as a coordination point for ATP; sequence SGGVDS.

The protein belongs to the tRNA(Ile)-lysidine synthase family.

It localises to the cytoplasm. The catalysed reaction is cytidine(34) in tRNA(Ile2) + L-lysine + ATP = lysidine(34) in tRNA(Ile2) + AMP + diphosphate + H(+). Ligates lysine onto the cytidine present at position 34 of the AUA codon-specific tRNA(Ile) that contains the anticodon CAU, in an ATP-dependent manner. Cytidine is converted to lysidine, thus changing the amino acid specificity of the tRNA from methionine to isoleucine. The chain is tRNA(Ile)-lysidine synthase from Shewanella woodyi (strain ATCC 51908 / MS32).